The sequence spans 623 residues: MPHSDELDAGNVLAVENLNIAFMQDQQKIAAVRNLSFSLQRGETLAIVGESGSGKSVTALALMRLLEQAGGLVQCDKMLLRRRSRDVIELSEQSATQMRHVRGADMAMIFQEPMTSLNPVFTVGEQIAESIRLHQNASREEAMVEAKRMLDQVRIPEAQTILSRYPHQLSGGMRQRVMIAMALSCRPAVLIADEPTTALDVTIQAQILQLIKVLQKEMSMGVIFITHDMGVVAEIADRVLVMYQGEAVETGTVEQIFHAPQHPYTRALLAAVPQLGAMKGLDYPRRFPLISLEHPAKQAPPIEQKTVVDGEPVLRVRNLVTRFSLRSGLLNRVTREVHAVEKVSFDLWPGETLSLVGESGSGKSTTGRALLRLVESQGGEIIFNGQRIDTLSPGKLQALRRDIQFIFQDPYASLDPRQTIGDSIIEPLRVHGLLPGKDAVARVAWLLERVGLLPEHAWRYPHEFSGGQRQRICIARALALNPKVIIADEAVSALDVSIRGQIINLLLDLQRDFGIAYLFISHDMAVVERISHRVAVMYLGQIVEIGPRRAVFENPQHPYTRKLLAAVPVAEPSRQRPQRVLLSDDLPSNIHLRGEEVAAVSLQCVGPGHYVAQPQSEYAFMRR.

2 consecutive ABC transporter domains span residues 15–269 (VENL…RALL) and 314–564 (LRVR…RKLL). Residues 49–56 (GESGSGKS) and 357–364 (GESGSGKS) each bind ATP.

The protein belongs to the ABC transporter superfamily. Glutathione importer (TC 3.A.1.5.11) family. As to quaternary structure, the complex is composed of two ATP-binding proteins (GsiA), two transmembrane proteins (GsiC and GsiD) and a solute-binding protein (GsiB).

Its subcellular location is the cell inner membrane. The enzyme catalyses glutathione(out) + ATP + H2O = glutathione(in) + ADP + phosphate + H(+). Functionally, part of the ABC transporter complex GsiABCD involved in glutathione import. Responsible for energy coupling to the transport system. The polypeptide is Glutathione import ATP-binding protein GsiA (Shigella dysenteriae serotype 1 (strain Sd197)).